The following is a 929-amino-acid chain: Protein unc-45 homolog A (929 aa).

TPR repeat units follow at residues 6-39 (VEQLRKEGNELFKCGDYGGALAAYTQALGLDATP), 43-76 (AVLHRNRAACYLKLEDYDKAETEASKAIEKDGGD), and 77-110 (VKALYRRSQALEKLGRLDQAVLDLQRCVSLEPKN). An N6-acetyllysine modification is found at K55. K468 carries the post-translational modification N6-acetyllysine.

As to quaternary structure, interacts with PGR isoforms A and B as well as with NR3C1 in the absence of ligand, and with HSP90AB1. Binding to HSP90AB1 involves 2 UNC45A monomers per HSP90AB1 dimer.

The protein localises to the cytoplasm. The protein resides in the perinuclear region. It localises to the nucleus. Its function is as follows. May act as co-chaperone for HSP90 (Potential). Prevents the stimulation of HSP90AB1 ATPase activity by AHSA1. Positive factor in promoting PGR function in the cell. May be necessary for proper folding of myosin (Potential). Necessary for normal cell proliferation. Necessary for normal myotube formation and myosin accumulation during muscle cell development. May play a role in erythropoiesis in stroma cells in the spleen. This chain is Protein unc-45 homolog A (UNC45A), found in Pongo abelii (Sumatran orangutan).